Consider the following 456-residue polypeptide: Chromosomal replication initiator protein DnaA (456 aa).

The tract at residues 1–79 (MSQEIWADVL…QHPQVSFQVL (79 aa)) is domain I, interacts with DnaA modulators. Residues 79 to 112 (LPASQDALLLPSDPPPAPISPGRAPAPPPADNRK) form a domain II region. Positions 89–112 (PSDPPPAPISPGRAPAPPPADNRK) are disordered. Pro residues predominate over residues 90-108 (SDPPPAPISPGRAPAPPPA). The interval 113-329 (TLNPKYTFEN…GALMRVVAFS (217 aa)) is domain III, AAA+ region. Residues Gly157, Gly159, Lys160, and Thr161 each contribute to the ATP site. Positions 330–456 (SLNNVPFSRA…KGLEDEDSRA (127 aa)) are domain IV, binds dsDNA.

The protein belongs to the DnaA family. In terms of assembly, oligomerizes as a right-handed, spiral filament on DNA at oriC.

Its subcellular location is the cytoplasm. In terms of biological role, plays an essential role in the initiation and regulation of chromosomal replication. ATP-DnaA binds to the origin of replication (oriC) to initiate formation of the DNA replication initiation complex once per cell cycle. Binds the DnaA box (a 9 base pair repeat at the origin) and separates the double-stranded (ds)DNA. Forms a right-handed helical filament on oriC DNA; dsDNA binds to the exterior of the filament while single-stranded (ss)DNA is stabiized in the filament's interior. The ATP-DnaA-oriC complex binds and stabilizes one strand of the AT-rich DNA unwinding element (DUE), permitting loading of DNA polymerase. After initiation quickly degrades to an ADP-DnaA complex that is not apt for DNA replication. Binds acidic phospholipids. The sequence is that of Chromosomal replication initiator protein DnaA from Deinococcus deserti (strain DSM 17065 / CIP 109153 / LMG 22923 / VCD115).